Reading from the N-terminus, the 109-residue chain is Large ribosomal subunit protein uL24 (109 aa).

This sequence belongs to the universal ribosomal protein uL24 family. As to quaternary structure, part of the 50S ribosomal subunit.

Functionally, one of two assembly initiator proteins, it binds directly to the 5'-end of the 23S rRNA, where it nucleates assembly of the 50S subunit. In terms of biological role, one of the proteins that surrounds the polypeptide exit tunnel on the outside of the subunit. This chain is Large ribosomal subunit protein uL24, found in Legionella pneumophila (strain Paris).